The chain runs to 76 residues: Alpha/kappa-conotoxin-like pl14.1 (76 aa).

The N-terminal stretch at 1 to 27 is a signal peptide; sequence MPSVRSVTCCCLLWMMLSVQLVTPGSP. Positions 28–39 are excised as a propeptide; that stretch reads ATAQLSGQRTAR. Intrachain disulfides connect Cys46–Cys61 and Cys50–Cys63. Residue Asn64 is modified to Asparagine amide. Residues 65–76 constitute a propeptide that is removed on maturation; it reads GKRDVVSSSMAV.

Belongs to the conotoxin J superfamily. In terms of tissue distribution, expressed by the venom duct.

The protein resides in the secreted. Its function is as follows. Highly inhibits both nicotinic acetylcholine receptors (neuronal (alpha-3/beta-4) and muscular (alpha-1/beta-1/epsilon/delta) subtypes) and the voltage-gated potassium channel Kv1.6/KCNA6 subtype. This Conus planorbis (Planorbis cone) protein is Alpha/kappa-conotoxin-like pl14.1.